A 330-amino-acid chain; its full sequence is Ketol-acid reductoisomerase (NADP(+)) (330 aa).

Residues 2–182 (VETFYEKDAD…GCTRAGVIKT (181 aa)) enclose the KARI N-terminal Rossmann domain. NADP(+)-binding positions include 25–28 (YGSQ), Lys-48, Ser-51, Ser-53, and 83–86 (DEVQ). The active site involves His-108. Gly-134 contributes to the NADP(+) binding site. A KARI C-terminal knotted domain is found at 183 to 328 (TFKEETETDL…EKLRAMMPWI (146 aa)). The Mg(2+) site is built by Asp-191, Glu-195, Glu-227, and Glu-231. Position 252 (Ser-252) interacts with substrate.

The protein belongs to the ketol-acid reductoisomerase family. Mg(2+) serves as cofactor.

The enzyme catalyses (2R)-2,3-dihydroxy-3-methylbutanoate + NADP(+) = (2S)-2-acetolactate + NADPH + H(+). It carries out the reaction (2R,3R)-2,3-dihydroxy-3-methylpentanoate + NADP(+) = (S)-2-ethyl-2-hydroxy-3-oxobutanoate + NADPH + H(+). Its pathway is amino-acid biosynthesis; L-isoleucine biosynthesis; L-isoleucine from 2-oxobutanoate: step 2/4. It functions in the pathway amino-acid biosynthesis; L-valine biosynthesis; L-valine from pyruvate: step 2/4. Involved in the biosynthesis of branched-chain amino acids (BCAA). Catalyzes an alkyl-migration followed by a ketol-acid reduction of (S)-2-acetolactate (S2AL) to yield (R)-2,3-dihydroxy-isovalerate. In the isomerase reaction, S2AL is rearranged via a Mg-dependent methyl migration to produce 3-hydroxy-3-methyl-2-ketobutyrate (HMKB). In the reductase reaction, this 2-ketoacid undergoes a metal-dependent reduction by NADPH to yield (R)-2,3-dihydroxy-isovalerate. The chain is Ketol-acid reductoisomerase (NADP(+)) from Petrotoga mobilis (strain DSM 10674 / SJ95).